The chain runs to 71 residues: DNA-directed RNA polymerase subunit omega (71 aa).

It belongs to the RNA polymerase subunit omega family. As to quaternary structure, the RNAP catalytic core consists of 2 alpha, 1 beta, 1 beta' and 1 omega subunit. When a sigma factor is associated with the core the holoenzyme is formed, which can initiate transcription.

The catalysed reaction is RNA(n) + a ribonucleoside 5'-triphosphate = RNA(n+1) + diphosphate. Its function is as follows. Promotes RNA polymerase assembly. Latches the N- and C-terminal regions of the beta' subunit thereby facilitating its interaction with the beta and alpha subunits. The polypeptide is DNA-directed RNA polymerase subunit omega (Levilactobacillus brevis (strain ATCC 367 / BCRC 12310 / CIP 105137 / JCM 1170 / LMG 11437 / NCIMB 947 / NCTC 947) (Lactobacillus brevis)).